Here is a 349-residue protein sequence, read N- to C-terminus: MSDTMPEIVSPLVAENSQEQEESVLISLDIEEDKLFLLHFIIGTYFGPDLRKQHHRPKQSAFQIQALKNVVVDELSGSLMKRAELERVYYHIIRNVDPSLVMKPKKLREYFNAKRNDSNRDYPLFVDLFPRKLHPETHVRHKFKFIRSIVFINDPDTSCMREECVARFKRLTGLDSFALSLSVDVTKSNGVVAANEVKVEIDESVEPVKEDNAGTCTSGEESDVAAKPEVKSEAHGGLMVGLMDIGECDDAYLFRVSLPGVKRDERYFSCEVEDNGKVLVRGVTTTGGKRVKRYSHVFEMQTRSLCPPGNFSVSFRLPGPVHPHEFSGNFGTDGILEGVVMKNLQKQTV.

A disordered region spans residues 210–230 (EDNAGTCTSGEESDVAAKPEV). In terms of domain architecture, sHSP spans 233 to 349 (EAHGGLMVGL…VMKNLQKQTV (117 aa)).

Belongs to the small heat shock protein (HSP20) family. As to quaternary structure, homodimer or oligomer. May form an 16-mer complex. Interacts with MBD7 (via C-terminus). Interacts with IDM1 (via N-terminus). Interacts with IMD3. Part of a complex made of MBD7, IDM1, IDM2, IDM3 and ROS1. In terms of tissue distribution, expressed in cotyledons and hypocotyls in young seedlings.

Its subcellular location is the nucleus. It is found in the nucleoplasm. Its function is as follows. Prevents DNA hypermethylation and transcriptional silencing of transgenes and of some endogenous genes. May act as a molecular chaperone of IDM1, regulating its H3K18 acetylation activity. This Arabidopsis thaliana (Mouse-ear cress) protein is Increased DNA methylation 2.